Reading from the N-terminus, the 375-residue chain is Biotin synthase, mitochondrial (375 aa).

Residues 1 to 16 constitute a mitochondrion transit peptide; sequence MMSTIYRHLSTARPAL. The 230-residue stretch at 81–310 folds into the Radical SAM core domain; the sequence is HDPTKVQLCT…IATARIVMPK (230 aa). 3 residues coordinate [4Fe-4S] cluster: C99, C103, and C106. Residues C143, C176, C236, and R314 each contribute to the [2Fe-2S] cluster site.

The protein belongs to the radical SAM superfamily. Biotin synthase family. It depends on [4Fe-4S] cluster as a cofactor. The cofactor is [2Fe-2S] cluster.

It localises to the mitochondrion. It catalyses the reaction (4R,5S)-dethiobiotin + (sulfur carrier)-SH + 2 reduced [2Fe-2S]-[ferredoxin] + 2 S-adenosyl-L-methionine = (sulfur carrier)-H + biotin + 2 5'-deoxyadenosine + 2 L-methionine + 2 oxidized [2Fe-2S]-[ferredoxin]. The protein operates within cofactor biosynthesis; biotin biosynthesis; biotin from 7,8-diaminononanoate: step 2/2. This Saccharomyces cerevisiae (strain ATCC 204508 / S288c) (Baker's yeast) protein is Biotin synthase, mitochondrial (BIO2).